A 78-amino-acid chain; its full sequence is Delta-conotoxin TxVIA (78 aa).

The signal sequence occupies residues 1–22; that stretch reads MKLTCMMIVAVLFLTAWTFATA. Positions 23 to 49 are excised as a propeptide; it reads DDSGNGLENLFSNAHHQMKNPEASKLN. 3 disulfide bridges follow: C53–C68, C60–C72, and C67–C77. A Methionine sulfoxide; partial modification is found at M59.

It belongs to the conotoxin O1 superfamily. In terms of tissue distribution, expressed by the venom duct. Is present in all duct parts with a highest content in part 4 (distal part near the pharynx).

It is found in the secreted. Delta-conotoxins bind to site 6 of voltage-gated sodium channels (Nav) and inhibit the inactivation process. Binding of this toxin is strongly calcium-dependent but not voltage-dependent. The binding site is most likely on the extracellular side of the sodium channel. Binds receptor sites on both mollusk and rat central nervous system, but despite its high affinity binding to rat sodium channel, it has no functional effect in vivo and in vitro on it. Also has no effect on Gambusia fish. Is important in mollusk for the paralysis of the prey. Upon injection of the peptide, a subordinate lobster assumes an exaggerated dominant posture (of a 'King-Kong' lobster!). The polypeptide is Delta-conotoxin TxVIA (Conus textile (Cloth-of-gold cone)).